Consider the following 138-residue polypeptide: Large ribosomal subunit protein bL17 (138 aa).

The protein belongs to the bacterial ribosomal protein bL17 family. Part of the 50S ribosomal subunit. Contacts protein L32.

This chain is Large ribosomal subunit protein bL17, found in Jannaschia sp. (strain CCS1).